We begin with the raw amino-acid sequence, 192 residues long: NADH:FMN oxidoreductase (192 aa).

The tract at residues 1-20 (MSDKPNAVSSHTTPDVPEVA) is disordered. FMN-binding positions include 60-63 (TATS), 77-84 (NIAETSSS), A111, and R117.

Belongs to the non-flavoprotein flavin reductase family.

Its subcellular location is the cytoplasm. It carries out the reaction FMNH2 + NAD(+) = FMN + NADH + 2 H(+). It functions in the pathway sulfur metabolism; dibenzothiophene degradation. An NADH:FMN oxidoreductase which supplies reduced FMN for the '4S' desulfurization pathway that removes covalently bound sulfur from dibenzothiophene (DBT) without breaking carbon-carbon bonds. Provides DszA and DszC (DBTO2-monooxygenase and DBT-monooxygenase respectively) with reduced flavin (FMN). In Rhodococcus erythropolis (Arthrobacter picolinophilus), this protein is NADH:FMN oxidoreductase.